The sequence spans 578 residues: Glutamate--tRNA ligase (578 aa).

Positions proline 97–asparagine 107 match the 'HIGH' region motif.

Belongs to the class-I aminoacyl-tRNA synthetase family. Glutamate--tRNA ligase type 2 subfamily.

It is found in the cytoplasm. The enzyme catalyses tRNA(Glu) + L-glutamate + ATP = L-glutamyl-tRNA(Glu) + AMP + diphosphate. In terms of biological role, catalyzes the attachment of glutamate to tRNA(Glu) in a two-step reaction: glutamate is first activated by ATP to form Glu-AMP and then transferred to the acceptor end of tRNA(Glu). This Hyperthermus butylicus (strain DSM 5456 / JCM 9403 / PLM1-5) protein is Glutamate--tRNA ligase.